We begin with the raw amino-acid sequence, 213 residues long: Orotate phosphoribosyltransferase (213 aa).

5-phospho-alpha-D-ribose 1-diphosphate is bound at residue K26. 34-35 (FF) contributes to the orotate binding site. Residues 72–73 (YK), R99, K100, K103, H105, and 124–132 (DDVITAGTA) each bind 5-phospho-alpha-D-ribose 1-diphosphate. Residues T128 and R156 each contribute to the orotate site.

It belongs to the purine/pyrimidine phosphoribosyltransferase family. PyrE subfamily. Homodimer. Requires Mg(2+) as cofactor.

The enzyme catalyses orotidine 5'-phosphate + diphosphate = orotate + 5-phospho-alpha-D-ribose 1-diphosphate. The protein operates within pyrimidine metabolism; UMP biosynthesis via de novo pathway; UMP from orotate: step 1/2. Functionally, catalyzes the transfer of a ribosyl phosphate group from 5-phosphoribose 1-diphosphate to orotate, leading to the formation of orotidine monophosphate (OMP). This chain is Orotate phosphoribosyltransferase, found in Shigella dysenteriae serotype 1 (strain Sd197).